A 716-amino-acid chain; its full sequence is Probable calcium-binding mitochondrial carrier K02F3.2 (716 aa).

An N-terminal domain region spans residues 1–345 (MSFDHLLTSS…CLKDIQAIDP (345 aa)). 4 EF-hand domains span residues 93-121 (YNKE…FCAF), 127-162 (SPDA…TQPL), 165-195 (QDFD…CQLL), and 198-233 (FYEE…VKGH). Ca(2+)-binding residues include Asp106, Thr108, Asp110, Glu117, Asp140, Asn142, Ser144, Thr146, and Glu151. Ca(2+) is bound by residues Asp211, Asn213, Asn215, Thr217, and Asp222. Residues 346–362 (ERLKRVSQMDRLINIKA) form a linker loop domain region. The interval 372–664 (GTAFLESAYR…RLFYVDFAGS (293 aa)) is carrier domain. 3 Solcar repeats span residues 376-468 (LESA…MRDK), 475-560 (IPLY…AKLA), and 568-656 (NSPG…LQRL). 6 consecutive transmembrane segments (helical) span residues 382–399 (FLLG…VYPI), 443–462 (GLLP…LTMN), 485–498 (GTGG…TNPL), 535–554 (GSRA…FPAY), 574–591 (FASA…VTPA), and 631–650 (GTAA…LLTY). The tract at residues 665–716 (RPTGSELATTKTIQDESSTNPDHVGGYKLAAATFSGIEHKFGLFLPKFETSK) is C-terminal domain.

The protein belongs to the mitochondrial carrier (TC 2.A.29) family. In terms of assembly, homodimer (via N-terminus).

It is found in the mitochondrion inner membrane. Its function is as follows. Mitochondrial and calcium-binding carrier that catalyzes the calcium-dependent exchange of cytoplasmic glutamate with mitochondrial aspartate across the mitochondrial inner membrane. The chain is Probable calcium-binding mitochondrial carrier K02F3.2 from Caenorhabditis elegans.